Here is a 223-residue protein sequence, read N- to C-terminus: Kynurenine formamidase (223 aa).

Phe34 is a binding site for substrate. Residues His64, His68, and Asp70 each coordinate Zn(2+). The active-site Proton donor/acceptor is His74. Residues His174 and Glu186 each coordinate Zn(2+).

Belongs to the Cyclase 1 superfamily. KynB family. As to quaternary structure, homodimer. Requires Zn(2+) as cofactor.

The enzyme catalyses N-formyl-L-kynurenine + H2O = L-kynurenine + formate + H(+). It functions in the pathway amino-acid degradation; L-tryptophan degradation via kynurenine pathway; L-kynurenine from L-tryptophan: step 2/2. In terms of biological role, catalyzes the hydrolysis of N-formyl-L-kynurenine to L-kynurenine, the second step in the kynurenine pathway of tryptophan degradation. The protein is Kynurenine formamidase of Polaromonas naphthalenivorans (strain CJ2).